The sequence spans 239 residues: dITP/XTP pyrophosphatase (239 aa).

Residue 7-12 participates in substrate binding; the sequence is THNEGK. The Proton acceptor role is filled by aspartate 74. Residue aspartate 74 coordinates Mg(2+). Substrate-binding positions include serine 75, 182–185, lysine 214, and 219–220; these read FGYD and HR.

Belongs to the HAM1 NTPase family. In terms of assembly, homodimer. Requires Mg(2+) as cofactor.

The enzyme catalyses XTP + H2O = XMP + diphosphate + H(+). The catalysed reaction is dITP + H2O = dIMP + diphosphate + H(+). It catalyses the reaction ITP + H2O = IMP + diphosphate + H(+). In terms of biological role, pyrophosphatase that catalyzes the hydrolysis of nucleoside triphosphates to their monophosphate derivatives, with a high preference for the non-canonical purine nucleotides XTP (xanthosine triphosphate), dITP (deoxyinosine triphosphate) and ITP. Seems to function as a house-cleaning enzyme that removes non-canonical purine nucleotides from the nucleotide pool, thus preventing their incorporation into DNA/RNA and avoiding chromosomal lesions. In Bifidobacterium animalis subsp. lactis (strain AD011), this protein is dITP/XTP pyrophosphatase.